Here is a 445-residue protein sequence, read N- to C-terminus: 3-phosphoshikimate 1-carboxyvinyltransferase (445 aa).

The 3-phosphoshikimate site is built by Lys28, Ser29, and Arg33. Residue Lys28 coordinates phosphoenolpyruvate. Positions 101 and 129 each coordinate phosphoenolpyruvate. 4 residues coordinate 3-phosphoshikimate: Ser175, Gln177, Asp328, and Lys355. A phosphoenolpyruvate-binding site is contributed by Gln177. The active-site Proton acceptor is Asp328. Residues Arg359 and Arg402 each coordinate phosphoenolpyruvate.

Belongs to the EPSP synthase family. Monomer.

It localises to the cytoplasm. The enzyme catalyses 3-phosphoshikimate + phosphoenolpyruvate = 5-O-(1-carboxyvinyl)-3-phosphoshikimate + phosphate. The protein operates within metabolic intermediate biosynthesis; chorismate biosynthesis; chorismate from D-erythrose 4-phosphate and phosphoenolpyruvate: step 6/7. Its function is as follows. Catalyzes the transfer of the enolpyruvyl moiety of phosphoenolpyruvate (PEP) to the 5-hydroxyl of shikimate-3-phosphate (S3P) to produce enolpyruvyl shikimate-3-phosphate and inorganic phosphate. The protein is 3-phosphoshikimate 1-carboxyvinyltransferase of Rhodopseudomonas palustris (strain BisA53).